Reading from the N-terminus, the 460-residue chain is Cysteine--tRNA ligase (460 aa).

A Zn(2+)-binding site is contributed by Cys-28. The 'HIGH' region signature appears at Met-30–His-40. 3 residues coordinate Zn(2+): Cys-209, His-234, and Glu-238. Residues Lys-266–Ser-270 carry the 'KMSKS' region motif. Lys-269 serves as a coordination point for ATP.

The protein belongs to the class-I aminoacyl-tRNA synthetase family. As to quaternary structure, monomer. Zn(2+) is required as a cofactor.

The protein localises to the cytoplasm. The enzyme catalyses tRNA(Cys) + L-cysteine + ATP = L-cysteinyl-tRNA(Cys) + AMP + diphosphate. In Pseudomonas putida (strain ATCC 47054 / DSM 6125 / CFBP 8728 / NCIMB 11950 / KT2440), this protein is Cysteine--tRNA ligase.